The primary structure comprises 61 residues: Large ribosomal subunit protein uL30 (61 aa).

It belongs to the universal ribosomal protein uL30 family. Part of the 50S ribosomal subunit.

The polypeptide is Large ribosomal subunit protein uL30 (Thermosipho africanus (strain TCF52B)).